The primary structure comprises 484 residues: Protein nucleotidyltransferase YdiU (484 aa).

ATP contacts are provided by glycine 87, glycine 89, arginine 90, lysine 110, aspartate 122, glycine 123, arginine 173, and arginine 180. The active-site Proton acceptor is aspartate 249. Residues asparagine 250 and aspartate 259 each contribute to the Mg(2+) site. Aspartate 259 is an ATP binding site. The tract at residues 463-484 (EQEKYAELPPPSDRPYRTFCGT) is disordered.

The protein belongs to the SELO family. Mg(2+) serves as cofactor. Requires Mn(2+) as cofactor.

The catalysed reaction is L-seryl-[protein] + ATP = 3-O-(5'-adenylyl)-L-seryl-[protein] + diphosphate. It catalyses the reaction L-threonyl-[protein] + ATP = 3-O-(5'-adenylyl)-L-threonyl-[protein] + diphosphate. The enzyme catalyses L-tyrosyl-[protein] + ATP = O-(5'-adenylyl)-L-tyrosyl-[protein] + diphosphate. It carries out the reaction L-histidyl-[protein] + UTP = N(tele)-(5'-uridylyl)-L-histidyl-[protein] + diphosphate. The catalysed reaction is L-seryl-[protein] + UTP = O-(5'-uridylyl)-L-seryl-[protein] + diphosphate. It catalyses the reaction L-tyrosyl-[protein] + UTP = O-(5'-uridylyl)-L-tyrosyl-[protein] + diphosphate. In terms of biological role, nucleotidyltransferase involved in the post-translational modification of proteins. It can catalyze the addition of adenosine monophosphate (AMP) or uridine monophosphate (UMP) to a protein, resulting in modifications known as AMPylation and UMPylation. The chain is Protein nucleotidyltransferase YdiU from Geobacillus kaustophilus (strain HTA426).